Reading from the N-terminus, the 516-residue chain is DNA topoisomerase large subunit (516 aa).

An ATP-binding site is contributed by 128–136 (VTGGMNGVG). A DNA-binding region spans residues 369–400 (AALARKLAAEKAAETKAAKKASKAKVHKHIKA).

It belongs to the type II topoisomerase family. In terms of assembly, part of the DNA topoisomerase complex made of gp39, gp52 and gp60. Mg(2+) is required as a cofactor.

The catalysed reaction is ATP-dependent breakage, passage and rejoining of double-stranded DNA.. Functionally, large subunit of the DNA topoisomerase that untwists superhelical DNA. Controls of topological states of double-stranded DNA by transient breakage and subsequent rejoining of DNA strands. This is DNA topoisomerase large subunit (39) from Escherichia coli (Bacteriophage T4).